Consider the following 386-residue polypeptide: Putative gustatory receptor 22b (386 aa).

The Cytoplasmic portion of the chain corresponds to 1 to 48 (MFGSSREIRPYLARQMLKTTLYGSWLLGIFPFTLDSGKRIRQLRRSRC). Residues 49–69 (LTLYGLVLNYFLIFTLIRLAF) traverse the membrane as a helical segment. Residues 70–89 (EYRKHKLEAFKRNPVLEMIN) are Extracellular-facing. The chain crosses the membrane as a helical span at residues 90 to 110 (VVIGIINVLSALIVHFMNFWG). Topologically, residues 111–155 (SRKVGEICNELLILEYQDFEGLNGRNCPNFNCFVIQKCLTILGQL) are cytoplasmic. Residues 156–176 (LSFFTLNFALPGLEFHICLVL) traverse the membrane as a helical segment. Topologically, residues 177-178 (LS) are extracellular. A helical membrane pass occupies residues 179-199 (CLMEFSLNLNIMHYHVGVLLI). At 200–254 (YRYVWLINEQLKDLVSQLKLNPETDFSRIHQFLSLYKRLLELNRKLVIAYEYQMT) the chain is on the cytoplasmic side. Residues 255–275 (LFIIAQLSGNIVVIYFLIVYG) form a helical membrane-spanning segment. At 276-282 (LSMRTYS) the chain is on the extracellular side. Residues 283–303 (IFLVAFPNSLLINIWDFWLCI) traverse the membrane as a helical segment. Topologically, residues 304–363 (AACDLTEKAGDETAIILKIFSDLEHRDDKLEMSVNEFAWLCSHRKFRFQLCGLFSMNCRM) are cytoplasmic. The helical transmembrane segment at 364–384 (GFKMIITTFLYLVYLVQFDYM) threads the bilayer. Residues 385 to 386 (NL) lie on the Extracellular side of the membrane.

It belongs to the insect chemoreceptor superfamily. Gustatory receptor (GR) family. Gr22e subfamily. In terms of tissue distribution, expressed in taste bristles in the foreleg and labial palps. In larvae, is expressed in neurons of the dorsal and posterior pharyngeal sense organs. Expressed in taste neurons that mediate sensitivity to bitter compounds.

Its subcellular location is the cell membrane. Probable gustatory receptor which mediates acceptance or avoidance behavior, depending on its substrates. Seems to be involved in the sensing of bitter taste since it is expressed in neurons that mediate sensitivity to bitter compounds. The polypeptide is Putative gustatory receptor 22b (Drosophila melanogaster (Fruit fly)).